Here is a 598-residue protein sequence, read N- to C-terminus: NADH-quinone oxidoreductase subunit C/D (598 aa).

The interval 1 to 189 (MTDSTTHDRE…DPFELTRQKQ (189 aa)) is NADH dehydrogenase I subunit C. The segment at 213-598 (DFMFLNLGPN…IDFVMSDVDR (386 aa)) is NADH dehydrogenase I subunit D.

In the N-terminal section; belongs to the complex I 30 kDa subunit family. This sequence in the C-terminal section; belongs to the complex I 49 kDa subunit family. In terms of assembly, NDH-1 is composed of 13 different subunits. Subunits NuoB, CD, E, F, and G constitute the peripheral sector of the complex.

It is found in the cell inner membrane. It catalyses the reaction a quinone + NADH + 5 H(+)(in) = a quinol + NAD(+) + 4 H(+)(out). NDH-1 shuttles electrons from NADH, via FMN and iron-sulfur (Fe-S) centers, to quinones in the respiratory chain. The immediate electron acceptor for the enzyme in this species is believed to be ubiquinone. Couples the redox reaction to proton translocation (for every two electrons transferred, four hydrogen ions are translocated across the cytoplasmic membrane), and thus conserves the redox energy in a proton gradient. The protein is NADH-quinone oxidoreductase subunit C/D of Edwardsiella ictaluri (strain 93-146).